A 132-amino-acid chain; its full sequence is Venom CUB domain-containing protein 2 (132 aa).

The first 17 residues, 1 to 17, serve as a signal peptide directing secretion; that stretch reads MKTLFLAIALFSAVALA. The CUB domain occupies 22–129; it reads ESAELVPGGE…RGFVACKATA (108 aa). Cystine bridges form between cysteine 66–cysteine 125 and cysteine 77–cysteine 94.

Belongs to the venom CUB family. Expressed by the venom gland (posterior main gland) (at protein level).

It is found in the secreted. This Platymeris rhadamanthus (Red spot assassin bug) protein is Venom CUB domain-containing protein 2.